Reading from the N-terminus, the 86-residue chain is Cell division topological specificity factor (86 aa).

It belongs to the MinE family.

Its function is as follows. Prevents the cell division inhibition by proteins MinC and MinD at internal division sites while permitting inhibition at polar sites. This ensures cell division at the proper site by restricting the formation of a division septum at the midpoint of the long axis of the cell. The chain is Cell division topological specificity factor from Stenotrophomonas maltophilia (strain K279a).